The primary structure comprises 947 residues: MSKKRLHEIAKEIGKSSKEVVERAKSLGLDVKSHASSVEEADANKIASSFAAGVTKDAQAGSAKDKQVAEQKAKAAKATTPQPAAATQEASQPVAVKPKSRNFKAEREARAKEQAARRQAGQNRSNDRKSDYRQLGRSQGQQTERAGHKSQNQQRDRRFDNRPSSGNNRNDGHRQAGNRDKNRSFNANSRQQDTGRQGQTQAGAPKIDFKARAAALKAEQNAEYARQRESRFREQEEAKRLEQQARQEAKAAALKAQTEDKKHREASAKATEPIASMAAAPVAKPVDKRRKKQNRPDKGHDRDHGLEDGQKKNKKSWNSQNQVRNQKNSNWNNNKKNKKGKHHKNSNTAPKPVTERKFHELPKEFEYSEGMTVAEIAKRIKREPAEIVKKLFMMGVMATQNQSLDGDTIELLMVDYGIEAKAKVEVDEADIERFFTDDSYLNPENIVERAPVVTIMGHVDHGKTTLLDTLRNSRVATGEAGGITQHIGAYQIEEAGKKITFLDTPGHAAFTSMRARGASVTDITILIVAADDGVMPQTIEAINHSKAAGVPIIVAINKIDKPGANPERVISELAEHGIISTAWGGECEFVEISAKFNKNIDELLETVLLVAEVEELKADPTVRAIGTVIEARLDKGKGAVATLLVQQGTLHVQDPIVVGNTFGRVRAMTNDLGRRVKSAEPSTPVSITGLNETPMAGDHFAVYADEKAARAAGEERAKRALLKQRQNTQRVSLDNLFDTLKAGEIKTVNVIIKADVQGSVEALAASLLKIDVEGVRVNVVHSAVGAINESDVTLAEASNAVIIGFNVRPTPQARQQADADDVEIRLHSIIYKVIEEVEEAMKGKLDPEYQEKVLGEAIIRETFKVSKVGTIGGFMVVNGKVTRDSSVRVIRDSVVIFDGKLASLKHYKDDVKEIGNAQEGGLMIEGFNDIKVDDTIEAYVMEEIIRK.

Residues 55-361 (TKDAQAGSAK…PVTERKFHEL (307 aa)) form a disordered region. The span at 63–73 (AKDKQVAEQKA) shows a compositional bias: basic and acidic residues. Positions 76-90 (AKATTPQPAAATQEA) are enriched in low complexity. Composition is skewed to basic and acidic residues over residues 103 to 116 (FKAEREARAKEQAA), 125 to 134 (SNDRKSDYRQ), and 170 to 183 (NDGHRQAGNRDKNR). A compositionally biased stretch (low complexity) spans 190 to 204 (RQQDTGRQGQTQAGA). 3 stretches are compositionally biased toward basic and acidic residues: residues 225–249 (ARQRESRFREQEEAKRLEQQARQEA), 257–267 (QTEDKKHREAS), and 294–311 (NRPDKGHDRDHGLEDGQK). Positions 316-334 (SWNSQNQVRNQKNSNWNNN) are enriched in low complexity. Residues 335 to 345 (KKNKKGKHHKN) are compositionally biased toward basic residues. The 170-residue stretch at 448–617 (ERAPVVTIMG…LLVAEVEELK (170 aa)) folds into the tr-type G domain. The segment at 457–464 (GHVDHGKT) is G1. Residue 457 to 464 (GHVDHGKT) participates in GTP binding. Positions 482-486 (GITQH) are G2. The segment at 503–506 (DTPG) is G3. Residues 503 to 507 (DTPGH) and 557 to 560 (NKID) each bind GTP. The interval 557-560 (NKID) is G4. Residues 593–595 (SAK) are G5.

The protein belongs to the TRAFAC class translation factor GTPase superfamily. Classic translation factor GTPase family. IF-2 subfamily.

The protein resides in the cytoplasm. Its function is as follows. One of the essential components for the initiation of protein synthesis. Protects formylmethionyl-tRNA from spontaneous hydrolysis and promotes its binding to the 30S ribosomal subunits. Also involved in the hydrolysis of GTP during the formation of the 70S ribosomal complex. The polypeptide is Translation initiation factor IF-2 (Streptococcus equi subsp. zooepidemicus (strain MGCS10565)).